The following is a 460-amino-acid chain: Cyclin-A1-1 (460 aa).

Disordered stretches follow at residues 1 to 52 (MSNI…ITNQ) and 95 to 126 (PHKV…KSPQ). 2 stretches are compositionally biased toward low complexity: residues 10–19 (SSFSSSTKSS) and 100–111 (SSPSKSDDGSVS).

Belongs to the cyclin family. Cyclin AB subfamily. Interacts with FZR2/CCS52A1, FZR1/CCS52A2 and FZR3/CCS52B.

In Arabidopsis thaliana (Mouse-ear cress), this protein is Cyclin-A1-1 (CYCA1-1).